The following is a 219-amino-acid chain: uncharacterized protein (219 aa).

Helical transmembrane passes span 14–34, 37–57, 123–143, 155–175, and 189–209; these read LVYS…FGVL, TLGF…AGAS, FLLG…ALGV, VYSA…LPNL, and VALA…AALA.

Belongs to the AzlC family.

The protein localises to the cell membrane. This is an uncharacterized protein from Archaeoglobus fulgidus (strain ATCC 49558 / DSM 4304 / JCM 9628 / NBRC 100126 / VC-16).